Consider the following 815-residue polypeptide: Ent-sandaracopimara-8(14),15-diene synthase, chloroplastic (815 aa).

The N-terminal 38 residues, 1–38, are a transit peptide targeting the chloroplast; sequence MLPSSICSMGQIPRTSPHYYGMLPKQMSKGHPPMVTRA. D550, D554, N696, T700, and E704 together coordinate Mg(2+). The short motif at 550–554 is the DDXXD motif element; it reads DDFFD.

This sequence belongs to the terpene synthase family. Mg(2+) is required as a cofactor.

It is found in the plastid. Its subcellular location is the chloroplast. It catalyses the reaction ent-copalyl diphosphate = ent-sandaracopimara-8(14),15-diene + diphosphate. The catalysed reaction is 9alpha-copalyl diphosphate = (12E)-9alpha-labda-8(17),12,14-triene + diphosphate. Its function is as follows. Involved in the biosynthesis of oryzalexin A-F phytoalexins. Catalyzes the conversion of ent-copalyl diphosphate to the phytoalexin precursor ent-sandaracopimaradiene. In Oryza sativa subsp. japonica (Rice), this protein is Ent-sandaracopimara-8(14),15-diene synthase, chloroplastic.